The primary structure comprises 465 residues: Apolipoprotein N-acyltransferase (465 aa).

6 consecutive transmembrane segments (helical) span residues 12–32 (AVLG…LSML), 49–69 (ALWG…LHPL), 80–100 (LPVA…LLLL), 122–142 (LLAL…LFWI), 161–181 (WLGS…LWQL), and 189–209 (CAWW…SLSP). A CN hydrolase domain is found at 221–448 (WQPAIPTREK…DAVAAAELQR (228 aa)). Glu262 functions as the Proton acceptor in the catalytic mechanism. Residue Lys312 is part of the active site. The active-site Nucleophile is the Cys360.

The protein belongs to the CN hydrolase family. Apolipoprotein N-acyltransferase subfamily.

It is found in the cell inner membrane. The catalysed reaction is N-terminal S-1,2-diacyl-sn-glyceryl-L-cysteinyl-[lipoprotein] + a glycerophospholipid = N-acyl-S-1,2-diacyl-sn-glyceryl-L-cysteinyl-[lipoprotein] + a 2-acyl-sn-glycero-3-phospholipid + H(+). It participates in protein modification; lipoprotein biosynthesis (N-acyl transfer). Its function is as follows. Catalyzes the phospholipid dependent N-acylation of the N-terminal cysteine of apolipoprotein, the last step in lipoprotein maturation. This chain is Apolipoprotein N-acyltransferase, found in Parasynechococcus marenigrum (strain WH8102).